A 492-amino-acid chain; its full sequence is Probable cytosol aminopeptidase (492 aa).

2 residues coordinate Mn(2+): Lys248 and Asp253. Lys260 is a catalytic residue. The Mn(2+) site is built by Asp271, Asp330, and Glu332. The active site involves Arg334.

Belongs to the peptidase M17 family. Mn(2+) is required as a cofactor.

Its subcellular location is the cytoplasm. It catalyses the reaction Release of an N-terminal amino acid, Xaa-|-Yaa-, in which Xaa is preferably Leu, but may be other amino acids including Pro although not Arg or Lys, and Yaa may be Pro. Amino acid amides and methyl esters are also readily hydrolyzed, but rates on arylamides are exceedingly low.. It carries out the reaction Release of an N-terminal amino acid, preferentially leucine, but not glutamic or aspartic acids.. Presumably involved in the processing and regular turnover of intracellular proteins. Catalyzes the removal of unsubstituted N-terminal amino acids from various peptides. This is Probable cytosol aminopeptidase (pepA) from Aeropyrum pernix (strain ATCC 700893 / DSM 11879 / JCM 9820 / NBRC 100138 / K1).